The primary structure comprises 508 residues: Light-independent protochlorophyllide reductase subunit B (508 aa).

Asp36 contributes to the [4Fe-4S] cluster binding site. The active-site Proton donor is Asp294. Residue 429-430 (GM) coordinates substrate.

This sequence belongs to the ChlB/BchB/BchZ family. In terms of assembly, protochlorophyllide reductase is composed of three subunits; ChlL, ChlN and ChlB. Forms a heterotetramer of two ChlB and two ChlN subunits. [4Fe-4S] cluster is required as a cofactor.

It carries out the reaction chlorophyllide a + oxidized 2[4Fe-4S]-[ferredoxin] + 2 ADP + 2 phosphate = protochlorophyllide a + reduced 2[4Fe-4S]-[ferredoxin] + 2 ATP + 2 H2O. Its pathway is porphyrin-containing compound metabolism; chlorophyll biosynthesis (light-independent). Component of the dark-operative protochlorophyllide reductase (DPOR) that uses Mg-ATP and reduced ferredoxin to reduce ring D of protochlorophyllide (Pchlide) to form chlorophyllide a (Chlide). This reaction is light-independent. The NB-protein (ChlN-ChlB) is the catalytic component of the complex. This is Light-independent protochlorophyllide reductase subunit B from Crocosphaera subtropica (strain ATCC 51142 / BH68) (Cyanothece sp. (strain ATCC 51142)).